The sequence spans 601 residues: Lanthanide-dependent methanol dehydrogenase (601 aa).

A signal peptide spans 1–21 (MRAVHLLALGAGLAAASPALA). Cysteines 124 and 125 form a disulfide. Residues R130, T174, S189, G190, and G191 each coordinate pyrroloquinoline quinone. E192 is a binding site for La(3+). Cysteines 197 and 256 form a disulfide. A pyrroloquinoline quinone-binding site is contributed by W258. The La(3+) site is built by N276, D318, and D320. The active-site Proton acceptor is D318. R345 is a binding site for pyrroloquinoline quinone. Cysteines 408 and 437 form a disulfide. 2 residues coordinate pyrroloquinoline quinone: W494 and W558.

It belongs to the bacterial PQQ dehydrogenase family. As to quaternary structure, homodimer. La(3+) serves as cofactor. It depends on Nd(3+) as a cofactor. Requires pyrroloquinoline quinone as cofactor.

The protein resides in the periplasm. The catalysed reaction is 2 Fe(III)-[cytochrome cL] + methanol = 2 Fe(II)-[cytochrome cL] + formaldehyde + 2 H(+). Catalyzes the oxidation of methanol to formaldehyde, but only in the presence of lanthanides (Ln). Contributes to methanol metabolism when La(3+) is present in the natural environment of the bacterium, allowing bacterial growth with methanol as carbon and energy source. Thereby is an essential enzyme for Ln-dependent methylotrophy. Uses a specific cytochrome cL (XoxG), encoded by the adjacent gene in the locus, as electron acceptor. Also plays a role in the transcriptional regulation of the mxa and xox1 operons, most likely acting as a lanthanide sensory module. Is also able to oxidize formaldehyde to formate in vitro, but this activity does not occur in vivo. This chain is Lanthanide-dependent methanol dehydrogenase, found in Methylorubrum extorquens (strain ATCC 14718 / DSM 1338 / JCM 2805 / NCIMB 9133 / AM1) (Methylobacterium extorquens).